Reading from the N-terminus, the 256-residue chain is Hydroxyacylglutathione hydrolase (256 aa).

Zn(2+)-binding residues include H57, H59, D61, H62, H115, D134, and H172.

This sequence belongs to the metallo-beta-lactamase superfamily. Glyoxalase II family. Monomer. Zn(2+) serves as cofactor.

The catalysed reaction is an S-(2-hydroxyacyl)glutathione + H2O = a 2-hydroxy carboxylate + glutathione + H(+). It participates in secondary metabolite metabolism; methylglyoxal degradation; (R)-lactate from methylglyoxal: step 2/2. Thiolesterase that catalyzes the hydrolysis of S-D-lactoyl-glutathione to form glutathione and D-lactic acid. This is Hydroxyacylglutathione hydrolase from Jannaschia sp. (strain CCS1).